The sequence spans 106 residues: RNA-binding protein Hfq (106 aa).

The 60-residue stretch at 9-68 (DPYLNALRKERVPVSIYLVNGIKLQGQIESFDAFVILLRNNISQMVYKHAVSTIVPSRNI) folds into the Sm domain. Positions 78–106 (EDEAGEEISAEYTPNAEGQAEATADPLYD) are disordered.

Belongs to the Hfq family. As to quaternary structure, homohexamer.

In terms of biological role, RNA chaperone that binds small regulatory RNA (sRNAs) and mRNAs to facilitate mRNA translational regulation in response to envelope stress, environmental stress and changes in metabolite concentrations. Also binds with high specificity to tRNAs. This is RNA-binding protein Hfq from Dichelobacter nodosus (strain VCS1703A).